We begin with the raw amino-acid sequence, 155 residues long: MKIGLCAFSGYKIYPGHGKTMVKIDGKSFTFLDKKCERSYLMKRNPRKVTWTVLYRRKHRKGIEEEASKKRTRRTQKFQRAIVGASLAEILAKRNMKPEVRKAQRDQAIKVAKEQKRAVKAAKKAAAPAPAKKSAPKQKAAKVTQKAAPRVGGKR.

Residues 119 to 155 are disordered; sequence VKAAKKAAAPAPAKKSAPKQKAAKVTQKAAPRVGGKR. Residues 124–133 are compositionally biased toward low complexity; that stretch reads KAAAPAPAKK.

It belongs to the eukaryotic ribosomal protein eL24 family.

This is Large ribosomal subunit protein eL24 (RpL24) from Drosophila melanogaster (Fruit fly).